We begin with the raw amino-acid sequence, 1218 residues long: Cytosolic carboxypeptidase 1 (1218 aa).

Disordered regions lie at residues 476–512 and 590–617; these read VVMK…RVAP and TEDD…PTLH. The segment covering 477–499 has biased composition (basic and acidic residues); the sequence is VMKERASPKGEEAKEDPKGHDRT. The Peptidase M14 domain maps to 840-1130; the sequence is YPYTYSTLQM…KFCVGLLRLK (291 aa). Residues His912, Glu915, and His1009 each contribute to the Zn(2+) site. The active-site Proton donor/acceptor is Glu1094. Phosphoserine is present on Ser1160. Positions 1193–1218 are disordered; it reads ENTGDYEPSAQEEALSDSEVSRTHLI.

It belongs to the peptidase M14 family. In terms of assembly, interacts with MYLK. Requires Zn(2+) as cofactor. In terms of tissue distribution, widely expressed. Highly expressed in the cerebellum and cortex of adult mouse brain. Expressed at similar levels in both the cerebellum and the cortex throughout all developmental stages. Also expressed in sciatic nerve transection, spinal motor neurons undergoing axon regeneration, testis, heart, eye, lung, pancreas, intestine, stomach, pituitary, spleen, adrenal, kidney and in developing brain. Expression in cranial motor nuclei is the same as that observed in uninjured primary motor neurons. Expression is prevalent in sensory neurons and hippocampal CA3 neurons in addition to regenerating motor neurons.

Its subcellular location is the cytoplasm. It is found in the cytosol. It localises to the nucleus. The protein resides in the mitochondrion. The enzyme catalyses (L-glutamyl)(n+1)-gamma-L-glutamyl-L-glutamyl-[protein] + H2O = (L-glutamyl)(n)-gamma-L-glutamyl-L-glutamyl-[protein] + L-glutamate. It catalyses the reaction C-terminal L-alpha-aminoacyl-L-glutamyl-L-glutamyl-[tubulin] + H2O = C-terminal L-alpha-aminoacyl-L-glutamyl-[tubulin] + L-glutamate. In terms of biological role, metallocarboxypeptidase that mediates protein deglutamylation of tubulin and non-tubulin target proteins. Catalyzes the removal of polyglutamate side chains present on the gamma-carboxyl group of glutamate residues within the C-terminal tail of alpha- and beta-tubulin. Specifically cleaves tubulin long-side-chains, while it is not able to remove the branching point glutamate. Also catalyzes the removal of polyglutamate residues from the carboxy-terminus of alpha-tubulin as well as non-tubulin proteins such as MYLK. Involved in KLF4 deglutamylation which promotes KLF4 proteasome-mediated degradation, thereby negatively regulating cell pluripotency maintenance and embryogenesis. This Mus musculus (Mouse) protein is Cytosolic carboxypeptidase 1.